We begin with the raw amino-acid sequence, 445 residues long: MSDYLSVSALTKYIKYKFDQDPHLQSVLIKGELSNFKKHSSGHLYFNVKDKESVISAMMFKGSASKLNFEPKEGDEVLLEARVSVFERRGNYQIYVNKMQLDGIGNLYQKLEALKKKLTEEGCFDKANKKSIPKFPKKIAVLTASTGAAIRDIHSTINSRFPLAEQIQISTLVQGEKAKDDIIEKIEYADSLGVDTIIVGRGGGSIEDLWNFNEEAVVRAIYNCKTPIISAVGHETDFTLSDFAADIRAATPTQAAVIATPDQYELLQQIQQYQFTLTRFIKKHLEQQRKHVEHLSSYYKFKKPTLLYDQQIQRRDDLEKRLKQQIQATFEQQRHRLMLLQQRYNLKALLSSVNQEQQNNLQLTNQLVKLLNSKILSYKNDLKNKVENLNNLSPTNTMLRGYAIVNKKDEVITSTKDLTENDQLTLTMKDGLVDAKVTKVRCNND.

Belongs to the XseA family. As to quaternary structure, heterooligomer composed of large and small subunits.

Its subcellular location is the cytoplasm. It catalyses the reaction Exonucleolytic cleavage in either 5'- to 3'- or 3'- to 5'-direction to yield nucleoside 5'-phosphates.. In terms of biological role, bidirectionally degrades single-stranded DNA into large acid-insoluble oligonucleotides, which are then degraded further into small acid-soluble oligonucleotides. The sequence is that of Exodeoxyribonuclease 7 large subunit from Staphylococcus aureus (strain JH1).